The chain runs to 301 residues: UDP-N-acetylenolpyruvoylglucosamine reductase (301 aa).

An FAD-binding PCMH-type domain is found at 24–190; the sequence is RVGGLAQFYD…VSAQLQLQPG (167 aa). The active site involves Arg169. Catalysis depends on Ser220, which acts as the Proton donor. Glu290 is an active-site residue.

This sequence belongs to the MurB family. FAD serves as cofactor.

The protein localises to the cytoplasm. The enzyme catalyses UDP-N-acetyl-alpha-D-muramate + NADP(+) = UDP-N-acetyl-3-O-(1-carboxyvinyl)-alpha-D-glucosamine + NADPH + H(+). It participates in cell wall biogenesis; peptidoglycan biosynthesis. Its function is as follows. Cell wall formation. The sequence is that of UDP-N-acetylenolpyruvoylglucosamine reductase from Synechococcus sp. (strain ATCC 27144 / PCC 6301 / SAUG 1402/1) (Anacystis nidulans).